A 282-amino-acid chain; its full sequence is Bis(5'-nucleosyl)-tetraphosphatase, symmetrical (282 aa).

Belongs to the Ap4A hydrolase family.

The enzyme catalyses P(1),P(4)-bis(5'-adenosyl) tetraphosphate + H2O = 2 ADP + 2 H(+). Hydrolyzes diadenosine 5',5'''-P1,P4-tetraphosphate to yield ADP. The sequence is that of Bis(5'-nucleosyl)-tetraphosphatase, symmetrical from Burkholderia pseudomallei (strain 668).